Here is a 386-residue protein sequence, read N- to C-terminus: Galactokinase (386 aa).

Residue 35–38 (EHTD) coordinates substrate. Residues Ser69 and 125 to 131 (GAGLSSS) contribute to the ATP site. Mg(2+) is bound by residues Ser131 and Glu163. Asp175 functions as the Proton acceptor in the catalytic mechanism. Residue Tyr224 participates in substrate binding.

Belongs to the GHMP kinase family. GalK subfamily.

It localises to the cytoplasm. It catalyses the reaction alpha-D-galactose + ATP = alpha-D-galactose 1-phosphate + ADP + H(+). Its pathway is carbohydrate metabolism; galactose metabolism. Its function is as follows. Catalyzes the transfer of the gamma-phosphate of ATP to D-galactose to form alpha-D-galactose-1-phosphate (Gal-1-P). The protein is Galactokinase of Vibrio vulnificus (strain CMCP6).